Here is a 139-residue protein sequence, read N- to C-terminus: Small ribosomal subunit protein uS12 (139 aa).

Belongs to the universal ribosomal protein uS12 family. As to quaternary structure, part of the 30S ribosomal subunit. Contacts proteins S8 and S17. May interact with IF1 in the 30S initiation complex.

With S4 and S5 plays an important role in translational accuracy. Its function is as follows. Interacts with and stabilizes bases of the 16S rRNA that are involved in tRNA selection in the A site and with the mRNA backbone. Located at the interface of the 30S and 50S subunits, it traverses the body of the 30S subunit contacting proteins on the other side and probably holding the rRNA structure together. The combined cluster of proteins S8, S12 and S17 appears to hold together the shoulder and platform of the 30S subunit. This chain is Small ribosomal subunit protein uS12, found in Mycoplasma pneumoniae (strain ATCC 29342 / M129 / Subtype 1) (Mycoplasmoides pneumoniae).